The sequence spans 315 residues: Homoserine kinase (315 aa).

97–107 contacts ATP; it reads PPARGLGSSAT.

This sequence belongs to the GHMP kinase family. Homoserine kinase subfamily.

It is found in the cytoplasm. It carries out the reaction L-homoserine + ATP = O-phospho-L-homoserine + ADP + H(+). It participates in amino-acid biosynthesis; L-threonine biosynthesis; L-threonine from L-aspartate: step 4/5. Its function is as follows. Catalyzes the ATP-dependent phosphorylation of L-homoserine to L-homoserine phosphate. In Prochlorococcus marinus (strain MIT 9301), this protein is Homoserine kinase.